The primary structure comprises 3828 residues: Histone-lysine N-methyltransferase trithorax (3828 aa).

Disordered regions lie at residues 25–179 (EDEA…AAAA), 356–390 (AVKS…ATKQ), and 512–589 (FRKQ…RSTR). Residues 29–57 (ASAAAAAAAATAATTEQHQQSEQSAGSSA) are compositionally biased toward low complexity. Residues 77-89 (AATSGNRGASSGA) are compositionally biased toward polar residues. Over residues 101–114 (GNGSSTGSKTTNGG) the composition is skewed to low complexity. The segment covering 152–165 (DGTEDTNNDDDDDS) has biased composition (acidic residues). A compositionally biased stretch (low complexity) spans 359-387 (SSGSSPNPNHNPNAVAGSTSAAAPGAPTA). Basic and acidic residues predominate over residues 513–523 (RKQEPQHKTPE). The segment covering 524–553 (DNDDDGSASSDAIEDDEDIDDDDAEENEEA) has biased composition (acidic residues). Over residues 554–581 (ASEKSAETTASVDEKEADDRQLVMDKHF) the composition is skewed to basic and acidic residues. The segment at residues 725–839 (ASTCAVCSAP…AGHRSRLSAI (115 aa)) is a DNA-binding region (nuclear receptor). Disordered stretches follow at residues 933 to 1036 (ESKE…SAVP), 1075 to 1094 (ELAA…TTSP), and 1131 to 1170 (AQPA…TTRN). Positions 960–974 (AKQDKEKARELEAEK) are enriched in basic and acidic residues. Low complexity-rich tracts occupy residues 998–1022 (ASTT…TNSS) and 1078–1094 (AAEA…TTSP). Over residues 1140 to 1170 (ESRSSKSNTQTEAKKTPATSGSSKGKVTTRN) the composition is skewed to polar residues. PHD-type zinc fingers lie at residues 1251-1334 (RALC…CTVC), 1335-1380 (YTCN…CLKC), and 1408-1469 (GNFC…CARR). The 162-residue stretch at 1483-1644 (AVMEEFKSSL…SEQFPWFQNE (162 aa)) folds into the Bromo domain. The C2HC pre-PHD-type zinc finger occupies 1708-1748 (TRVCLFCRKSGEGLSGEEARLLYCGHDCWVHINCAMWSAEV). Residues 1769-1816 (IKCTVCGNRGATVGCNVKSCGEHYHYPCARTIDCAFLTDKSMYCPAHA) form a PHD-type 4 zinc finger. The FYR N-terminal domain occupies 1856–1913 (KVQFHIGSVAVRQLGSIVPRFSDSFEAIVPINFLCSRLYWSSKEPWKIVEYTVRTTIQ). Disordered stretches follow at residues 2252–2272 (CEPM…AQLS), 2464–2510 (AHQK…QQQQ), 2826–2848 (RNTN…PQQS), 2897–2973 (RQQQ…SPAA), 2988–3031 (APAP…QLSM), 3117–3178 (ASAN…VPAG), 3314–3338 (NGSG…DDDD), and 3457–3487 (KLDV…PMRD). Low complexity-rich tracts occupy residues 2253–2268 (EPMS…ATGT), 2483–2510 (QGQQ…QQQQ), and 2836–2848 (SVLS…PQQS). The segment covering 2897–2917 (RQQQANELKNKQAAGQQTGST) has biased composition (polar residues). Composition is skewed to low complexity over residues 2956–2973 (ATSA…SPAA), 2988–2997 (APAPQPQQQE), 3005–3031 (LHQQ…QLSM), and 3117–3132 (ASAN…QQNS). Over residues 3148–3164 (QQRQEPTPLSNDVVVQS) the composition is skewed to polar residues. Acidic residues predominate over residues 3328–3338 (DDAEEDEDDDD). The FYR C-terminal domain maps to 3493-3577 (GPHLLYEIQS…EKCVKYTPKY (85 aa)). The SET domain occupies 3690-3806 (DYVGVFRSHI…QGEELTYDYK (117 aa)). Residues His3700, Arg3702, Tyr3744, and 3767–3768 (NH) contribute to the S-adenosyl-L-methionine site. Residues Cys3770, Cys3816, Cys3818, and Cys3823 each coordinate Zn(2+). The Post-SET domain maps to 3812–3828 (EKIPCSCGSKRCRKYLN).

The protein belongs to the class V-like SAM-binding methyltransferase superfamily. Histone-lysine methyltransferase family. TRX/MLL subfamily. As to quaternary structure, interacts with ash1 via its SET domain.

It localises to the nucleus. It carries out the reaction L-lysyl(9)-[histone H3] + 3 S-adenosyl-L-methionine = N(6),N(6),N(6)-trimethyl-L-lysyl(9)-[histone H3] + 3 S-adenosyl-L-homocysteine + 3 H(+). Functionally, histone methyltransferase that methylates 'Lys-4' of histone H3 (H3K4me). H3K4me represents a specific tag for epigenetic transcriptional activation. Functions in segment determination through interaction with genes of bithorax (BX-C) and antennapedia (ANT-C) complexes. Acts as an activator of BX-C. Involved in the very early regulation of homeotic genes expressed only in the posterior region of the embryo. This chain is Histone-lysine N-methyltransferase trithorax (trx), found in Drosophila virilis (Fruit fly).